We begin with the raw amino-acid sequence, 207 residues long: Claudin-11 (207 aa).

A topological domain (cytoplasmic) is located at residue Met-1. Residues 2–22 (VATCLQVVGFVTSFVGWIGII) form a helical membrane-spanning segment. Residues 23-82 (VTTSTNDWVVTCSYTIPTCRKMDELGSKGLWADCVMATGLYHCKPLVDILILPGYVQACR) are Extracellular-facing. The chain crosses the membrane as a helical span at residues 83–103 (ALMIAASVLGLPAILLLLTVL). Residues 104-122 (PCIRMGHEPGVAKYRRAQL) are Cytoplasmic-facing. The chain crosses the membrane as a helical span at residues 123 to 143 (AGVLLILLALCAIVATIWFPV). At 144 to 157 (CAHREITIVSFGYS) the chain is on the extracellular side. The helical transmembrane segment at 158-178 (LYAGWIGAVMCLVGGCVIVCC) threads the bilayer. Topologically, residues 179–207 (SGDAQSFGENRFYYSSGSSSPTHAKSAHV) are cytoplasmic. Residues Ser-193, Ser-194, Ser-197, and Ser-198 each carry the phosphoserine modification.

This sequence belongs to the claudin family. As to quaternary structure, interacts with tetraspanin-3/TSPAN3. Interacts with OCLN.

Its subcellular location is the cell junction. The protein resides in the tight junction. The protein localises to the cell membrane. Functionally, plays a major role in tight junction-specific obliteration of the intercellular space, through calcium-independent cell-adhesion activity. The protein is Claudin-11 (Cldn11) of Mus musculus (Mouse).